Reading from the N-terminus, the 327-residue chain is GMP reductase (327 aa).

The active-site Thioimidate intermediate is cysteine 176. 205–228 lines the NADP(+) pocket; the sequence is IIADGGIRTHGDIAKSIRFGASMV.

Belongs to the IMPDH/GMPR family. GuaC type 2 subfamily.

The enzyme catalyses IMP + NH4(+) + NADP(+) = GMP + NADPH + 2 H(+). Functionally, catalyzes the irreversible NADPH-dependent deamination of GMP to IMP. It functions in the conversion of nucleobase, nucleoside and nucleotide derivatives of G to A nucleotides, and in maintaining the intracellular balance of A and G nucleotides. This Streptococcus suis (strain 98HAH33) protein is GMP reductase.